Here is a 363-residue protein sequence, read N- to C-terminus: Protein RecA (363 aa).

Residue 79-86 (GPESSGKT) coordinates ATP.

Belongs to the RecA family.

It localises to the cytoplasm. In terms of biological role, can catalyze the hydrolysis of ATP in the presence of single-stranded DNA, the ATP-dependent uptake of single-stranded DNA by duplex DNA, and the ATP-dependent hybridization of homologous single-stranded DNAs. It interacts with LexA causing its activation and leading to its autocatalytic cleavage. In Methylobacterium sp. (strain 4-46), this protein is Protein RecA.